The chain runs to 306 residues: Tryptophan 2,3-dioxygenase (306 aa).

The disordered stretch occupies residues 1 to 33 (MQPPGDDAAPRCPFAGAHAPDAPHVPEAAGDDA). Substrate contacts are provided by residues 75–79 (FIIQH), Tyr137, and Arg141. His264 is a heme binding site. Thr278 is a substrate binding site.

Belongs to the tryptophan 2,3-dioxygenase family. Homotetramer. It depends on heme as a cofactor.

It catalyses the reaction L-tryptophan + O2 = N-formyl-L-kynurenine. It participates in amino-acid degradation; L-tryptophan degradation via kynurenine pathway; L-kynurenine from L-tryptophan: step 1/2. Functionally, heme-dependent dioxygenase that catalyzes the oxidative cleavage of the L-tryptophan (L-Trp) pyrrole ring and converts L-tryptophan to N-formyl-L-kynurenine. Catalyzes the oxidative cleavage of the indole moiety. The protein is Tryptophan 2,3-dioxygenase of Burkholderia pseudomallei (strain 1106a).